The sequence spans 96 residues: UPF0298 protein LCA_1075 (96 aa).

Belongs to the UPF0298 family.

It is found in the cytoplasm. The polypeptide is UPF0298 protein LCA_1075 (Latilactobacillus sakei subsp. sakei (strain 23K) (Lactobacillus sakei subsp. sakei)).